The primary structure comprises 239 residues: MSEPLIFYPQGCCRAIFIRRYKRFTVEAMLDGEVVGVHTNNTGSMLGLLREGQEIYISPAQNPNRKLKWTLEAVMPFGEMIGVNTSVPNKMLQLAFEAGQLPEAGGYTAIKREAKVGNSRLDGLFTDDSGKLPKLWVECKNVTLVEDDIACFPDAQTERGRKHLVELMDLAAKGDRVALFFFVQRTDGSCFGPADFIDPEYAELFYKALDAGVKCWAYEAVLSERGIGIGRKLPLAACR.

The protein belongs to the SfsA family.

The polypeptide is Sugar fermentation stimulation protein homolog (Maridesulfovibrio salexigens (strain ATCC 14822 / DSM 2638 / NCIMB 8403 / VKM B-1763) (Desulfovibrio salexigens)).